A 475-amino-acid chain; its full sequence is Ribulose bisphosphate carboxylase large chain (475 aa).

Asn-123 and Thr-173 together coordinate substrate. The active-site Proton acceptor is the Lys-175. Lys-177 contributes to the substrate binding site. Mg(2+) contacts are provided by Lys-201, Asp-203, and Glu-204. Position 201 is an N6-carboxylysine (Lys-201). His-294 functions as the Proton acceptor in the catalytic mechanism. Arg-295, His-327, and Ser-379 together coordinate substrate.

It belongs to the RuBisCO large chain family. Type I subfamily. In terms of assembly, heterohexadecamer of 8 large chains and 8 small chains. Mg(2+) serves as cofactor.

The protein resides in the plastid. The protein localises to the cyanelle. The catalysed reaction is 2 (2R)-3-phosphoglycerate + 2 H(+) = D-ribulose 1,5-bisphosphate + CO2 + H2O. It carries out the reaction D-ribulose 1,5-bisphosphate + O2 = 2-phosphoglycolate + (2R)-3-phosphoglycerate + 2 H(+). RuBisCO catalyzes two reactions: the carboxylation of D-ribulose 1,5-bisphosphate, the primary event in carbon dioxide fixation, as well as the oxidative fragmentation of the pentose substrate in the photorespiration process. Both reactions occur simultaneously and in competition at the same active site. In Cyanophora paradoxa, this protein is Ribulose bisphosphate carboxylase large chain.